The following is a 108-amino-acid chain: Cytochrome c-555 (108 aa).

A signal peptide spans 1–22; sequence MSRFVSAALVGAALLVSGNAFA. Heme c contacts are provided by Cys36, Cys39, His40, and Met82.

In terms of processing, binds 1 heme c group covalently per subunit.

Its function is as follows. This basic c-type monoheme cytochrome has been found exclusively in the green photosynthetic bacteria, although its role in bacterial photosynthesis is not established. It has an unusually low redox potential compared with mitochondrial cytochrome c. It is reactive with cytochrome c oxidases but not with reductases. This is Cytochrome c-555 from Chlorobaculum tepidum (strain ATCC 49652 / DSM 12025 / NBRC 103806 / TLS) (Chlorobium tepidum).